We begin with the raw amino-acid sequence, 480 residues long: Glutamate--tRNA ligase (480 aa).

The 'HIGH' region signature appears at 21 to 31; sequence PSPTGYLHVGG. The Zn(2+) site is built by Cys-110, Cys-112, Cys-137, and His-139. A 'KMSKS' region motif is present at residues 248 to 252; sequence KLSKR. ATP is bound at residue Lys-251.

The protein belongs to the class-I aminoacyl-tRNA synthetase family. Glutamate--tRNA ligase type 1 subfamily. Monomer. The cofactor is Zn(2+).

Its subcellular location is the cytoplasm. The catalysed reaction is tRNA(Glu) + L-glutamate + ATP = L-glutamyl-tRNA(Glu) + AMP + diphosphate. Catalyzes the attachment of glutamate to tRNA(Glu) in a two-step reaction: glutamate is first activated by ATP to form Glu-AMP and then transferred to the acceptor end of tRNA(Glu). In Haemophilus influenzae (strain PittEE), this protein is Glutamate--tRNA ligase.